Here is a 119-residue protein sequence, read N- to C-terminus: Large ribosomal subunit protein uL14 (119 aa).

It belongs to the universal ribosomal protein uL14 family. As to quaternary structure, part of the 50S ribosomal subunit. Forms a cluster with proteins L3 and L19. In the 70S ribosome, L14 and L19 interact and together make contacts with the 16S rRNA in bridges B5 and B8.

Functionally, binds to 23S rRNA. Forms part of two intersubunit bridges in the 70S ribosome. This chain is Large ribosomal subunit protein uL14, found in Ehrlichia ruminantium (strain Gardel).